Reading from the N-terminus, the 285-residue chain is Bifunctional protein FolD (285 aa).

NADP(+)-binding positions include 166–168 (GAS) and Ile-232.

Belongs to the tetrahydrofolate dehydrogenase/cyclohydrolase family. In terms of assembly, homodimer.

It catalyses the reaction (6R)-5,10-methylene-5,6,7,8-tetrahydrofolate + NADP(+) = (6R)-5,10-methenyltetrahydrofolate + NADPH. It carries out the reaction (6R)-5,10-methenyltetrahydrofolate + H2O = (6R)-10-formyltetrahydrofolate + H(+). The protein operates within one-carbon metabolism; tetrahydrofolate interconversion. Catalyzes the oxidation of 5,10-methylenetetrahydrofolate to 5,10-methenyltetrahydrofolate and then the hydrolysis of 5,10-methenyltetrahydrofolate to 10-formyltetrahydrofolate. In Psychromonas ingrahamii (strain DSM 17664 / CCUG 51855 / 37), this protein is Bifunctional protein FolD.